Consider the following 1283-residue polypeptide: Oxysterol-binding protein homolog 2 (1283 aa).

The residue at position 2 (S2) is an N-acetylserine. At S7 the chain carries Phosphoserine. 2 ANK repeats span residues 106 to 134 (NGNT…SIND) and 206 to 235 (TGTT…EATV). Residues 289-386 (PPTYKGFLKK…WVNAIQSAIR (98 aa)) enclose the PH domain. Residues S422, S445, S451, S455, S458, S459, and S486 each carry the phosphoserine modification. Phosphothreonine is present on T488. Composition is skewed to polar residues over residues 504–518 (SNTL…SGSG) and 530–551 (ANLS…NNYI). 2 disordered regions span residues 504–571 (SNTL…LGIN) and 702–721 (TAGN…DTTA). Residues S512 and S515 each carry the phosphoserine modification. Residues 554-568 (FEGDEANSDDEEEDL) are compositionally biased toward acidic residues. Basic and acidic residues predominate over residues 707–716 (ESLENDKEQE). At S717 the chain carries Phosphoserine. The FFAT motif lies at 745–751 (EFYDAAE). The segment at 767-834 (STAAAPKHAP…SLKNFKAEDK (68 aa)) is disordered. T783 is modified (phosphothreonine). The residue at position 787 (S787) is a Phosphoserine. 2 stretches are compositionally biased toward basic and acidic residues: residues 791 to 810 (QDEK…KFEK) and 818 to 834 (DEPK…AEDK). Phosphoserine occurs at positions 825 and 1151. The tract at residues 897 to 1268 (SLWAVLKSMV…KYWRYTGKYW (372 aa)) is OSBP-related domain (ORD).

The protein belongs to the OSBP family. Interacts with SCS2.

Its subcellular location is the cell membrane. It localises to the endoplasmic reticulum membrane. Lipid transport protein (LTP) involved in non-vesicular transfer of lipids between membranes. Functions in phosphoinositide-coupled directional transport of various lipids by carrying the lipid molecule in a hydrophobic pocket and transferring it between membranes through the cytosol. Involved in maintenance of intracellular sterol distribution and homeostasis. Binds and transports sterol. Plays a role in the positive regulation of vesicular transport of ceramide from the ER to the Golgi, negatively regulating COPII-mediated ER export of cargos. This chain is Oxysterol-binding protein homolog 2, found in Saccharomyces cerevisiae (strain ATCC 204508 / S288c) (Baker's yeast).